The chain runs to 146 residues: UPF0260 protein VF_1660 (146 aa).

This sequence belongs to the UPF0260 family.

This Aliivibrio fischeri (strain ATCC 700601 / ES114) (Vibrio fischeri) protein is UPF0260 protein VF_1660.